The sequence spans 970 residues: Bifunctional glutamine synthetase adenylyltransferase/adenylyl-removing enzyme (970 aa).

Residues 1 to 454 (MNSLPPRPSL…HFQQVFAAPQ (454 aa)) are adenylyl removase. The interval 468–970 (QAVLASIWAG…WRRVMEEGKA (503 aa)) is adenylyl transferase.

The protein belongs to the GlnE family. Mg(2+) serves as cofactor.

The enzyme catalyses [glutamine synthetase]-O(4)-(5'-adenylyl)-L-tyrosine + phosphate = [glutamine synthetase]-L-tyrosine + ADP. It catalyses the reaction [glutamine synthetase]-L-tyrosine + ATP = [glutamine synthetase]-O(4)-(5'-adenylyl)-L-tyrosine + diphosphate. In terms of biological role, involved in the regulation of glutamine synthetase GlnA, a key enzyme in the process to assimilate ammonia. When cellular nitrogen levels are high, the C-terminal adenylyl transferase (AT) inactivates GlnA by covalent transfer of an adenylyl group from ATP to specific tyrosine residue of GlnA, thus reducing its activity. Conversely, when nitrogen levels are low, the N-terminal adenylyl removase (AR) activates GlnA by removing the adenylyl group by phosphorolysis, increasing its activity. The regulatory region of GlnE binds the signal transduction protein PII (GlnB) which indicates the nitrogen status of the cell. The sequence is that of Bifunctional glutamine synthetase adenylyltransferase/adenylyl-removing enzyme from Thioalkalivibrio sulfidiphilus (strain HL-EbGR7).